A 309-amino-acid polypeptide reads, in one-letter code: MQCVETNNLKQLLEQVKPYTKKGKLATYIPELGNANPDDLGIAIYHKETEYVHAGSSQMLFTLQSISKVITLALALLDRGEEYVFSKVGMEPTGDPFNSIIKLETTSPSKPLNPMINAGALAITSMLKGANNEEKIERILNFVREITDNPTIHYSAKVATSELETAYLNRSLCYYMKQNGIIDNDIEELMDLYTRQCAIEVNCIDLARIGLIFAMDGYDPYKQKQIIPKHITKICKTFMVTCGMYNESGEFAIRVGIPAKSGVAGGIFGCVKGEMGIGIFGPALDENGNSIAGFKILELLSAQEGWSIF.

Residues Ser-65, Asn-117, Glu-162, Asn-169, Tyr-193, Tyr-245, and Val-263 each coordinate substrate.

The protein belongs to the glutaminase family. As to quaternary structure, homotetramer.

It catalyses the reaction L-glutamine + H2O = L-glutamate + NH4(+). In Bacillus cytotoxicus (strain DSM 22905 / CIP 110041 / 391-98 / NVH 391-98), this protein is Glutaminase.